Consider the following 112-residue polypeptide: MKQVIAARTDIGMGQGKLAAQVAHASLNAYEYTDDRAVRRWKDEGQTKVVVKVGSERELYERSEEAKRAGLPTGLISDAGRTQLEPGTPTALAIGPAPDADVDQITGDLSLF.

Residues 64–99 form a disordered region; it reads EEAKRAGLPTGLISDAGRTQLEPGTPTALAIGPAPD.

It belongs to the PTH2 family.

It localises to the cytoplasm. The enzyme catalyses an N-acyl-L-alpha-aminoacyl-tRNA + H2O = an N-acyl-L-amino acid + a tRNA + H(+). The natural substrate for this enzyme may be peptidyl-tRNAs which drop off the ribosome during protein synthesis. The protein is Peptidyl-tRNA hydrolase of Halobacterium salinarum (strain ATCC 29341 / DSM 671 / R1).